We begin with the raw amino-acid sequence, 208 residues long: Recombination protein RecR (208 aa).

The segment at 60–75 (CKVCHNICDDEVCSIC) adopts a C4-type zinc-finger fold. One can recognise a Toprim domain in the interval 83–178 (SLVCVVENIK…RISVIARGVS (96 aa)).

It belongs to the RecR family.

Its function is as follows. May play a role in DNA repair. It seems to be involved in an RecBC-independent recombinational process of DNA repair. It may act with RecF and RecO. This Parabacteroides distasonis (strain ATCC 8503 / DSM 20701 / CIP 104284 / JCM 5825 / NCTC 11152) protein is Recombination protein RecR.